Here is a 747-residue protein sequence, read N- to C-terminus: DNA repair and recombination protein RAD54-like (747 aa).

The disordered stretch occupies residues 1-42 (MRRSLAPSQLARRKPEDRSSDDEDWQPGTVTPKKRKSSSETQ). The tract at residues 2-9 (RRSLAPSQ) is required for chromatin remodeling, strand pairing activities and coupling of ATPase activity. Position 38 is a phosphoserine (S38). Residues 170 to 345 (SRRIPGSHGC…FSLVHFVNSG (176 aa)) enclose the Helicase ATP-binding domain. 183–190 (DEMGLGKT) contacts ATP. The DEGH box motif lies at 296 to 299 (DEGH). The Helicase C-terminal domain occupies 500 to 653 (VLDYILAVTR…CVVDEEQDVE (154 aa)). N6-acetyllysine is present on K515. S572 bears the Phosphoserine; by NEK1 mark.

Belongs to the SNF2/RAD54 helicase family. In terms of assembly, homohexamer. Interacts (via N-terminus) with RAD51. Interacts with NAP1L1. Interacts with BRD9; this interaction orchestrates RAD51-RAD54 complex formation. In terms of processing, acetylated. Acetylation promotes interaction with BRD9, and subsequently with RAD54, which is essential for homologous recombination (HR). Phosphorylated. Phosphorylation at Ser-572 by NEK1 specifically in G2 phase allows efficient removal of RAD51 filaments from DNA. Hardly detectable in most tissues. Dramatically increased in thymus, spleen and testis.

It localises to the nucleus. The enzyme catalyses ATP + H2O = ADP + phosphate + H(+). Plays an essential role in homologous recombination (HR) which is a major pathway for repairing DNA double-strand breaks (DSBs), single-stranded DNA (ssDNA) gaps, and stalled or collapsed replication forks. Acts as a molecular motor during the homology search and guides RAD51 ssDNA along a donor dsDNA thereby changing the homology search from the diffusion-based mechanism to a motor-guided mechanism. Plays also an essential role in RAD51-mediated synaptic complex formation which consists of three strands encased in a protein filament formed once homology is recognized. Once DNA strand exchange occured, dissociates RAD51 from nucleoprotein filaments formed on dsDNA. Deficiency also resulted in an increased frequency of end-to-end chromosome fusions involving telomeres compared to the controls, suggesting a putative role in telomere capping. Non-homologous end joining (NHEJ) and homologous recombination (HR) represent the two major pathways of DNA double-strand break (DSB) repair in eukaryotic cells. LIG4 and RAD54L cooperate to support cellular proliferation, repair spontaneous DSBs, and prevent chromosome and single chromatid aberrations. This is DNA repair and recombination protein RAD54-like (Rad54l) from Mus musculus (Mouse).